Reading from the N-terminus, the 253-residue chain is Triosephosphate isomerase, cytosolic (253 aa).

2 residues coordinate substrate: Asn-10 and Lys-12. The Electrophile role is filled by His-96. Catalysis depends on Glu-166, which acts as the Proton acceptor.

The protein belongs to the triosephosphate isomerase family. As to quaternary structure, homodimer. In terms of tissue distribution, starchy endosperm.

Its subcellular location is the cytoplasm. The enzyme catalyses D-glyceraldehyde 3-phosphate = dihydroxyacetone phosphate. The protein operates within carbohydrate biosynthesis; gluconeogenesis. Its pathway is carbohydrate degradation; glycolysis; D-glyceraldehyde 3-phosphate from glycerone phosphate: step 1/1. The polypeptide is Triosephosphate isomerase, cytosolic (Hordeum vulgare (Barley)).